Here is a 941-residue protein sequence, read N- to C-terminus: Bifunctional glutamine synthetase adenylyltransferase/adenylyl-removing enzyme (941 aa).

The adenylyl removase stretch occupies residues 1–437 (MPMPTVSMSP…AAEFAELLAP (437 aa)). The interval 444–941 (PDALADYWRA…FPLGKDETAL (498 aa)) is adenylyl transferase.

Belongs to the GlnE family. Mg(2+) serves as cofactor.

The enzyme catalyses [glutamine synthetase]-O(4)-(5'-adenylyl)-L-tyrosine + phosphate = [glutamine synthetase]-L-tyrosine + ADP. It catalyses the reaction [glutamine synthetase]-L-tyrosine + ATP = [glutamine synthetase]-O(4)-(5'-adenylyl)-L-tyrosine + diphosphate. Involved in the regulation of glutamine synthetase GlnA, a key enzyme in the process to assimilate ammonia. When cellular nitrogen levels are high, the C-terminal adenylyl transferase (AT) inactivates GlnA by covalent transfer of an adenylyl group from ATP to specific tyrosine residue of GlnA, thus reducing its activity. Conversely, when nitrogen levels are low, the N-terminal adenylyl removase (AR) activates GlnA by removing the adenylyl group by phosphorolysis, increasing its activity. The regulatory region of GlnE binds the signal transduction protein PII (GlnB) which indicates the nitrogen status of the cell. This is Bifunctional glutamine synthetase adenylyltransferase/adenylyl-removing enzyme from Xanthomonas axonopodis pv. citri (strain 306).